A 1377-amino-acid chain; its full sequence is ATP-dependent helicase/nuclease subunit A (1377 aa).

One can recognise a UvrD-like helicase ATP-binding domain in the interval 4–478; it reads TSWTPGQQKV…IDLSKNFRSR (475 aa). An ATP-binding site is contributed by 25-32; the sequence is AAAGSGKT. The 342-residue stretch at 526–867 folds into the UvrD-like helicase C-terminal domain; that stretch reads FLFSDTKTEL…RIMSIHKSKG (342 aa). A compositionally biased stretch (acidic residues) spans 1036–1065; the sequence is FEEESDEQSDEERSDEERSDGEQSDGEQSD. The interval 1036-1072 is disordered; that stretch reads FEEESDEQSDEERSDEERSDGEQSDGEQSDGEQPRKD.

The protein belongs to the helicase family. AddA subfamily. As to quaternary structure, heterodimer of AddA and AddB/RexB. Mg(2+) serves as cofactor.

The catalysed reaction is Couples ATP hydrolysis with the unwinding of duplex DNA by translocating in the 3'-5' direction.. It catalyses the reaction ATP + H2O = ADP + phosphate + H(+). In terms of biological role, the heterodimer acts as both an ATP-dependent DNA helicase and an ATP-dependent, dual-direction single-stranded exonuclease. Recognizes the chi site generating a DNA molecule suitable for the initiation of homologous recombination. The AddA nuclease domain is required for chi fragment generation; this subunit has the helicase and 3' -&gt; 5' nuclease activities. The chain is ATP-dependent helicase/nuclease subunit A from Lachnoclostridium phytofermentans (strain ATCC 700394 / DSM 18823 / ISDg) (Clostridium phytofermentans).